Consider the following 133-residue polypeptide: Cell division protein FtsL (133 aa).

Topologically, residues 1-45 (MAVEKVYQPYDEQVYNSIPKQQPQTKPEKKTVSRKVVVQLTKFEK) are cytoplasmic. A helical membrane pass occupies residues 46 to 65 (VLYITLITVIAMLSIYMLSL). At 66–133 (KMDAYDTRGK…VVRSNGEAKN (68 aa)) the chain is on the extracellular side.

It belongs to the FtsL family.

It localises to the cell membrane. Essential cell division protein. This is Cell division protein FtsL from Staphylococcus aureus (strain NCTC 8325 / PS 47).